The sequence spans 92 residues: Beta-2-microglobulin (92 aa).

An Ig-like C1-type domain is found at 2 to 91; the sequence is PQIQVYTRHP…VSLNEPKTVI (90 aa). The cysteines at positions 22 and 77 are disulfide-linked.

This sequence belongs to the beta-2-microglobulin family. In terms of assembly, heterodimer of an alpha chain and a beta chain. Beta-2-microglobulin is the beta-chain of major histocompatibility complex class I molecules.

The protein resides in the secreted. Functionally, component of the class I major histocompatibility complex (MHC). Involved in the presentation of peptide antigens to the immune system. The polypeptide is Beta-2-microglobulin (B2m) (Mus cervicolor (Fawn-colored mouse)).